The sequence spans 472 residues: UDP-N-acetylmuramate--L-alanine ligase (472 aa).

Residue 122 to 128 (GSHGKTT) coordinates ATP.

The protein belongs to the MurCDEF family.

It localises to the cytoplasm. It carries out the reaction UDP-N-acetyl-alpha-D-muramate + L-alanine + ATP = UDP-N-acetyl-alpha-D-muramoyl-L-alanine + ADP + phosphate + H(+). The protein operates within cell wall biogenesis; peptidoglycan biosynthesis. In terms of biological role, cell wall formation. The polypeptide is UDP-N-acetylmuramate--L-alanine ligase (Myxococcus xanthus (strain DK1622)).